Here is a 231-residue protein sequence, read N- to C-terminus: Adenosylcobinamide-GDP ribazoletransferase (231 aa).

The next 5 membrane-spanning stretches (helical) occupy residues 28-48, 97-117, 121-141, 162-182, and 209-229; these read LWLF…PHFI, TGAG…TLLY, FWEI…LMLL, VFIG…ESLA, and VIGS…TIAG.

It belongs to the CobS family. It depends on Mg(2+) as a cofactor.

The protein localises to the cell membrane. The enzyme catalyses alpha-ribazole + adenosylcob(III)inamide-GDP = adenosylcob(III)alamin + GMP + H(+). It carries out the reaction alpha-ribazole 5'-phosphate + adenosylcob(III)inamide-GDP = adenosylcob(III)alamin 5'-phosphate + GMP + H(+). The protein operates within cofactor biosynthesis; adenosylcobalamin biosynthesis; adenosylcobalamin from cob(II)yrinate a,c-diamide: step 7/7. Its function is as follows. Joins adenosylcobinamide-GDP and alpha-ribazole to generate adenosylcobalamin (Ado-cobalamin). Also synthesizes adenosylcobalamin 5'-phosphate from adenosylcobinamide-GDP and alpha-ribazole 5'-phosphate. The chain is Adenosylcobinamide-GDP ribazoletransferase (cobS2) from Archaeoglobus fulgidus (strain ATCC 49558 / DSM 4304 / JCM 9628 / NBRC 100126 / VC-16).